The sequence spans 436 residues: Adenylosuccinate synthetase (436 aa).

GTP-binding positions include 12–18 and 40–42; these read GDEGKGK and GHT. Catalysis depends on aspartate 13, which acts as the Proton acceptor. Aspartate 13 and glycine 40 together coordinate Mg(2+). Residues 13–16, 38–41, threonine 128, arginine 142, glutamine 223, threonine 238, and arginine 302 contribute to the IMP site; these read DEGK and NAGH. Catalysis depends on histidine 41, which acts as the Proton donor. 298–304 is a substrate binding site; that stretch reads TTTGRRR. GTP-binding positions include arginine 304, 330 to 332, and 412 to 414; these read KLD and SLG.

The protein belongs to the adenylosuccinate synthetase family. As to quaternary structure, homodimer. The cofactor is Mg(2+).

It is found in the cytoplasm. The catalysed reaction is IMP + L-aspartate + GTP = N(6)-(1,2-dicarboxyethyl)-AMP + GDP + phosphate + 2 H(+). Its pathway is purine metabolism; AMP biosynthesis via de novo pathway; AMP from IMP: step 1/2. Functionally, plays an important role in the de novo pathway of purine nucleotide biosynthesis. Catalyzes the first committed step in the biosynthesis of AMP from IMP. This is Adenylosuccinate synthetase from Prochlorococcus marinus (strain MIT 9301).